A 65-amino-acid chain; its full sequence is Sarcoplasmic/endoplasmic reticulum calcium ATPase regulator ARLN (65 aa).

N-acetylmethionine is present on Met-1. The segment at Met-1–Asn-36 is disordered. The segment covering Gly-12–Asp-28 has biased composition (basic and acidic residues). Phosphoserine is present on Ser-19. The chain crosses the membrane as a helical span at residues Trp-44–Leu-64.

Homooligomer. Can also form heterooligomers with other sarcoplasmic/endoplasmic reticulum calcium ATPase (SERCA) regulators ERLN, PLN, SLN and STRIT1/DWORF. Monomer. Interacts as a monomer with ATP2A2/SERCA2; the interaction results in inhibition of ATP2A2 Ca(2+) affinity. In terms of tissue distribution, in the embryo, expressed in heart, epidermal epithelium, salivary gland, brown fat, intestinal epithelium and bladder urothelium.

It is found in the endoplasmic reticulum membrane. Functionally, inhibits the activity of the calcium ATPases ATP2A2/SERCA2 and ATP2A3/SERCA3 by decreasing their apparent affinity for Ca(2+). The protein is Sarcoplasmic/endoplasmic reticulum calcium ATPase regulator ARLN (Arln) of Mus musculus (Mouse).